The following is a 494-amino-acid chain: ATP synthase subunit beta, plastid (494 aa).

169-176 contacts ATP; the sequence is GGAGVGKT.

Belongs to the ATPase alpha/beta chains family. In terms of assembly, F-type ATPases have 2 components, CF(1) - the catalytic core - and CF(0) - the membrane proton channel. CF(1) has five subunits: alpha(3), beta(3), gamma(1), delta(1), epsilon(1). CF(0) has four main subunits: a(1), b(1), b'(1) and c(9-12).

It is found in the plastid membrane. The catalysed reaction is ATP + H2O + 4 H(+)(in) = ADP + phosphate + 5 H(+)(out). In terms of biological role, produces ATP from ADP in the presence of a proton gradient across the membrane. The catalytic sites are hosted primarily by the beta subunits. In Cuscuta sandwichiana (Kauna'oa), this protein is ATP synthase subunit beta, plastid (atpB).